Consider the following 391-residue polypeptide: Autotransporter heptosyltransferase Aah (391 aa).

3 residues coordinate ADP-D-glycero-beta-D-manno-heptose: Thr-101, Leu-102, and Gly-103. Asp-104 acts as the Proton acceptor in catalysis. Gln-218, Thr-220, Lys-224, Arg-251, Leu-275, Gly-296, and Glu-320 together coordinate ADP-D-glycero-beta-D-manno-heptose. 4 residues coordinate Fe(3+): Cys-333, Cys-336, Cys-352, and Cys-364.

This sequence belongs to the glycosyltransferase 9 family. Homododecamer composed of 6 homodimers forming a ring. The cofactor is Fe(3+).

It is found in the cytoplasm. It catalyses the reaction ADP-D-glycero-beta-D-manno-heptose + L-seryl-[protein] = O-(D-glycero-alpha-D-manno-heptosyl)-L-seryl-[protein] + ADP + H(+). The catalysed reaction is ADP-L-glycero-beta-D-manno-heptose + L-seryl-[protein] = O-(L-glycero-alpha-D-manno-heptosyl)-L-seryl-[protein] + ADP + H(+). Its function is as follows. Glycosylates autotransporter AIDA-I. Catalyzes the addition of both L, D-heptose and D, D-heptose sugars. Probably by glycosylating AIDA-I, involved in bacteria adhesion to host mammalian cells. In Escherichia coli, this protein is Autotransporter heptosyltransferase Aah.